Consider the following 755-residue polypeptide: MADSSSSLPPLCEKISYKNYFLRVVDLTILGFLFSLLLYRILLMNQNNSVWVVAFLCESFFSFIWLLITSIKWSPASYKSYPERLDERVHDLPSVDMFVTTADPVREPPILVANTLLSLLAVNYPANKLACYVSDDGCSPLTYFSLKEASKFAKIWVPFCKKYNIKVRAPFRYFLNPPAATESSEFSKDWEITKREYEKLSRRVEDATGDSHWLDAEDDFEDFSNTKPNDHSTIVKVVWENKGGVGVENEVPHFVYISREKRPNYLHHYKAGAMNFLVRVSGLMTNAPYMLNVDCDMYANEADVVRQAMCIFLQKSMNSNHCAFVQFPQEFYDSNADELTVLQSYLGRGIAGIQGPTYAGSGCFHTRRVMYGLSIDDLEDDGSLSSLATRKYLAEENLAREFGNSNEMVTSVVEALQRKPNPQNTLANSLEAAQEVGHCHFEYQTSWGKTIGWLYESTAEDANTSIGIHSRGWTSSYISPKPPAFLGAMPPGGPEAMLQQRRWATGLLEVLFNKQSPLIGMFCRKIRFRQSLAYLYIFTWGLRSIPELIYCLLPAYCLLHNAALFPKGVYLGIVVTLVGMHCLYSLWEFMSLGFSVQSWFASQSFWRIKTTCSWLFSIPDIILKLLGISKTVFIVTKKTMPKTMSGSGSEKSQREVDCPNQDSGKFEFDGSLYFLPGTFILLVNLAALAGCSVGLQRHRGGGSGLAEACGCILVVILFLPFLKGMFEKGKYGIPWSTLSKAAFLAVLFVVFSVGN.

The next 2 membrane-spanning stretches (helical) occupy residues 24-44 and 51-71; these read VVDL…ILLM and WVVA…ITSI. Active-site residues include Asp-136 and Asp-461. The next 6 membrane-spanning stretches (helical) occupy residues 534–556, 569–589, 615–635, 674–694, 702–722, and 733–753; these read YLYI…LPAY, VYLG…LWEF, LFSI…VFIV, FLPG…CSVG, GSGL…LPFL, and IPWS…VFSV.

The protein belongs to the glycosyltransferase 2 family. Plant cellulose synthase-like B subfamily. In terms of tissue distribution, expressed in young seedlings, primarily in the vascular tissue.

The protein resides in the golgi apparatus membrane. In terms of biological role, thought to be a Golgi-localized beta-glycan synthase that polymerize the backbones of noncellulosic polysaccharides (hemicelluloses) of plant cell wall. The chain is Cellulose synthase-like protein B3 (CSLB3) from Arabidopsis thaliana (Mouse-ear cress).